The sequence spans 282 residues: NADPH-dependent 7-cyano-7-deazaguanine reductase (282 aa).

Substrate is bound at residue 88 to 90 (IES). 90–91 (SK) provides a ligand contact to NADPH. The Thioimide intermediate role is filled by Cys190. Asp197 (proton donor) is an active-site residue. Residue 229 to 230 (HE) participates in substrate binding. 258 to 259 (RG) contributes to the NADPH binding site.

This sequence belongs to the GTP cyclohydrolase I family. QueF type 2 subfamily. In terms of assembly, homodimer.

Its subcellular location is the cytoplasm. The enzyme catalyses 7-aminomethyl-7-carbaguanine + 2 NADP(+) = 7-cyano-7-deazaguanine + 2 NADPH + 3 H(+). Its pathway is tRNA modification; tRNA-queuosine biosynthesis. Catalyzes the NADPH-dependent reduction of 7-cyano-7-deazaguanine (preQ0) to 7-aminomethyl-7-deazaguanine (preQ1). The sequence is that of NADPH-dependent 7-cyano-7-deazaguanine reductase from Salmonella arizonae (strain ATCC BAA-731 / CDC346-86 / RSK2980).